The primary structure comprises 93 residues: Putative transmembrane protein ORF25 (93 aa).

3 consecutive transmembrane segments (helical) span residues 1–21 (MAGI…NVNA), 22–42 (FLVL…YASI), and 60–80 (LWIF…VMSL).

Its subcellular location is the host membrane. The protein is Putative transmembrane protein ORF25 of His1 virus (isolate Australia/Victoria) (His1V).